The primary structure comprises 70 residues: Protein SlyX homolog (70 aa).

This sequence belongs to the SlyX family.

This Nitrobacter winogradskyi (strain ATCC 25391 / DSM 10237 / CIP 104748 / NCIMB 11846 / Nb-255) protein is Protein SlyX homolog.